A 2437-amino-acid polypeptide reads, in one-letter code: Neurogenic locus notch homolog protein 1 (2437 aa).

The N-terminal stretch at 1 to 20 (MNRFLVKLTLLTAASLATVA) is a signal peptide. 4 consecutive EGF-like domains span residues 21–57 (QGQRCSEYCQNGGICEYKPSGEASCRCPADFVGAQCQ), 58–98 (FPNP…RLCL), 101–138 (VNHACMNSPCRNGGTCSLLTLDTFTCRCQPGWSGKTCQ), and 139–175 (LADPCASNPCANGGQCSAFESHYICTCPPNFHGQTCR). Over 21-1726 (QGQRCSEYCQ…GGPPKTGEMY (1706 aa)) the chain is Extracellular. 111 disulfide bridges follow: cysteine 25/cysteine 35, cysteine 29/cysteine 45, cysteine 47/cysteine 56, cysteine 62/cysteine 73, cysteine 67/cysteine 86, cysteine 88/cysteine 97, cysteine 105/cysteine 116, cysteine 110/cysteine 126, cysteine 128/cysteine 137, cysteine 143/cysteine 154, cysteine 148/cysteine 163, cysteine 165/cysteine 174, cysteine 181/cysteine 194, cysteine 188/cysteine 203, cysteine 205/cysteine 214, cysteine 221/cysteine 232, cysteine 226/cysteine 242, cysteine 244/cysteine 253, cysteine 260/cysteine 271, cysteine 265/cysteine 280, cysteine 282/cysteine 291, cysteine 298/cysteine 311, cysteine 305/cysteine 320, cysteine 322/cysteine 331, cysteine 338/cysteine 349, cysteine 343/cysteine 358, cysteine 360/cysteine 369, cysteine 375/cysteine 386, cysteine 380/cysteine 397, cysteine 399/cysteine 408, cysteine 415/cysteine 428, cysteine 422/cysteine 437, cysteine 439/cysteine 448, cysteine 455/cysteine 466, cysteine 460/cysteine 475, cysteine 477/cysteine 486, cysteine 493/cysteine 503, cysteine 498/cysteine 512, cysteine 514/cysteine 523, cysteine 530/cysteine 541, cysteine 535/cysteine 550, cysteine 552/cysteine 561, cysteine 568/cysteine 578, cysteine 573/cysteine 587, cysteine 589/cysteine 598, cysteine 605/cysteine 616, cysteine 610/cysteine 625, cysteine 627/cysteine 636, cysteine 643/cysteine 653, cysteine 648/cysteine 662, cysteine 664/cysteine 673, cysteine 680/cysteine 691, cysteine 685/cysteine 700, cysteine 702/cysteine 711, cysteine 718/cysteine 728, cysteine 723/cysteine 737, cysteine 739/cysteine 748, cysteine 755/cysteine 766, cysteine 760/cysteine 775, cysteine 777/cysteine 786, cysteine 793/cysteine 804, cysteine 798/cysteine 813, cysteine 815/cysteine 824, cysteine 831/cysteine 842, cysteine 836/cysteine 853, cysteine 855/cysteine 864, cysteine 871/cysteine 882, cysteine 876/cysteine 891, cysteine 893/cysteine 902, cysteine 909/cysteine 920, cysteine 914/cysteine 929, cysteine 931/cysteine 940, cysteine 947/cysteine 958, cysteine 952/cysteine 967, cysteine 969/cysteine 978, cysteine 985/cysteine 996, cysteine 990/cysteine 1005, cysteine 1007/cysteine 1016, cysteine 1023/cysteine 1034, cysteine 1028/cysteine 1043, cysteine 1045/cysteine 1054, cysteine 1061/cysteine 1072, cysteine 1066/cysteine 1081, cysteine 1083/cysteine 1092, cysteine 1099/cysteine 1120, cysteine 1114/cysteine 1129, cysteine 1131/cysteine 1140, cysteine 1147/cysteine 1158, cysteine 1152/cysteine 1167, cysteine 1169/cysteine 1178, cysteine 1185/cysteine 1196, cysteine 1190/cysteine 1205, cysteine 1207/cysteine 1216, cysteine 1223/cysteine 1242, cysteine 1236/cysteine 1251, cysteine 1253/cysteine 1262, cysteine 1269/cysteine 1282, cysteine 1274/cysteine 1291, cysteine 1293/cysteine 1302, cysteine 1309/cysteine 1320, cysteine 1314/cysteine 1332, cysteine 1334/cysteine 1343, cysteine 1350/cysteine 1361, cysteine 1355/cysteine 1370, cysteine 1372/cysteine 1381, cysteine 1389/cysteine 1400, cysteine 1394/cysteine 1411, cysteine 1413/cysteine 1422, cysteine 1447/cysteine 1470, cysteine 1452/cysteine 1465, and cysteine 1461/cysteine 1477. An EGF-like 5; calcium-binding domain is found at 177-215 (DVNECAVSPSPCRNGGTCINEVGSYLCRCPPEYTGPHCQ). The 38-residue stretch at 217–254 (LYQPCLPSPCRSGGTCVQTSDTTHTCSCLPGFTGQTCE) folds into the EGF-like 6 domain. O-linked (Fuc...) threonine; alternate glycosylation is present at threonine 231. The O-linked (GalNAc...) threonine; alternate glycan is linked to threonine 231. Residues 256-292 (NVDDCTQHACENGGPCIDGINTYNCHCDKHWTGQYCT) enclose the EGF-like 7; calcium-binding domain. The EGF-like 8; calcium-binding domain maps to 294 to 332 (DVDECELSPNACQNGGTCHNTIGGFHCVCVNGWTGDDCS). The EGF-like 9; calcium-binding domain maps to 334–370 (NIDDCASAACSHGATCHDRVASFFCECPHGRTGLLCH). In terms of domain architecture, EGF-like 10 spans 371-409 (LDDACISNPCQKGSNCDTNPVSGKAICTCPPGYTGSACN). An EGF-like 11; calcium-binding domain is found at 411 to 449 (DIDECSLGANPCEHGGRCLNTKGSFQCKCLQGYEGPRCE). The 37-residue stretch at 451–487 (DVNECKSNPCQNDATCLDQIGGFHCICMPGYEGVFCQ) folds into the EGF-like 12; calcium-binding domain. An EGF-like 13; calcium-binding domain is found at 489-524 (NSDDCASQPCLNGKCIDKINSFHCECPKGFSGSLCQ). Positions 526–562 (DVDECASTPCKNGAKCTDGPNKYTCECTPGFSGIHCE) constitute an EGF-like 14; calcium-binding domain. Positions 564 to 599 (DINECASSPCHYGVCRDGVASFTCDCRPGYTGRLCE) constitute an EGF-like 15; calcium-binding domain. Residues 601–637 (NINECLSQPCRNGGTCQDRENAYICTCPKGTTGVNCE) enclose the EGF-like 16; calcium-binding domain. Residues 639 to 674 (NIDDCKRKPCDYGKCIDKINGYECVCEPGYSGSMCN) form the EGF-like 17; calcium-binding domain. Residues 676-712 (NIDDCALNPCHNGGTCIDGVNSFTCLCPDGFRDATCL) enclose the EGF-like 18; calcium-binding domain. Residues 714–749 (QHNECSSNPCIHGSCLDQINSYRCVCEAGWMGRNCD) form the EGF-like 19; calcium-binding domain. Residues 751-787 (NINECLSNPCVNGGTCKDMTSGYLCTCRAGFSGPNCQ) enclose the EGF-like 20; calcium-binding domain. One can recognise an EGF-like 21; calcium-binding domain in the interval 789-825 (NINECASNPCLNQGSCIDDVAGFKCNCMLPYTGEVCE). Positions 827 to 865 (VLAPCSPRPCKNGGVCRESEDFQSFSCNCPAGWQGQTCE) constitute an EGF-like 22 domain. An EGF-like 23; calcium-binding domain is found at 867 to 903 (DINECVRNPCTNGGVCENLRGGFQCRCNPGFTGALCE). An EGF-like 24; calcium-binding domain is found at 905–941 (DIDDCEPNPCSNGGVCQDRVNGFVCVCLAGFRGERCA). The EGF-like 25; calcium-binding domain occupies 943–979 (DIDECVSAPCRNGGNCTDCVNSYTCSCPAGFSGINCE). Asparagine 957 carries an N-linked (GlcNAc...) asparagine glycan. Positions 981-1017 (NTPDCTESSCFNGGTCVDGISSFSCVCLPGFTGNYCQ) constitute an EGF-like 26 domain. One can recognise an EGF-like 27; calcium-binding domain in the interval 1019-1055 (DVNECDSRPCQNGGSCQDGYGTYKCTCPHGYTGLNCQ). 2 EGF-like domains span residues 1057 to 1093 (LVRWCDSSPCKNGGSCWQQGASFTCQCASGWTGIYCD) and 1095 to 1141 (PSVS…SYCQ). The region spanning 1143-1179 (QVDECQPNPCQNGATCTDYLGGYSCECVPGYHGMNCS) is the EGF-like 30; calcium-binding domain. The N-linked (GlcNAc...) asparagine glycan is linked to asparagine 1177. The EGF-like 31; calcium-binding domain maps to 1181–1217 (EINECLSQPCQNGGTCIDLVNTYKCSCPRGTQGVHCE). The EGF-like 32; calcium-binding domain maps to 1219-1263 (DIDDCSPSVDPLTGEPRCFNGGRCVDRVGGYGCVCPAGFVGERCE). EGF-like domains are found at residues 1265–1303 (DVNECLSDPCDPSGSYNCVQLINDFRCECRTGYTGKRCE), 1305–1344 (VFNGCKDTPCKNGGTCAVASNTKHGYICKCQPGYSGSSCE), 1346–1382 (DSQSCGSLRCRNGATCVSGHLSPRCLCAPGFSGHECQ), and 1385–1423 (MDSPCLVNPCYNGGTCQPISDAPFYRCSCPANFNGLLCH). Residue threonine 1399 is glycosylated (O-linked (Fuc...) threonine; alternate). O-linked (GalNAc...) threonine; alternate glycosylation occurs at threonine 1399. LNR repeat units follow at residues 1447–1487 (CEIA…PWQN), 1488–1525 (CSAALQCWRYFNDGKCDEQCATAGCLYDGFDCQRLEGQ), and 1526–1566 (CNPL…VPQK). A glycan (N-linked (GlcNAc...) asparagine) is linked at asparagine 1487. 6 disulfide bridges follow: cysteine 1488/cysteine 1512, cysteine 1494/cysteine 1507, cysteine 1503/cysteine 1519, cysteine 1526/cysteine 1552, cysteine 1534/cysteine 1547, and cysteine 1543/cysteine 1559. N-linked (GlcNAc...) asparagine glycosylation occurs at asparagine 1585. A helical transmembrane segment spans residues 1727–1747 (PMFLVLLALAVLALAAVGVVV). The Cytoplasmic portion of the chain corresponds to 1748 to 2437 (SRKRKREHGQ…QMNHIPEAFK (690 aa)). The disordered stretch occupies residues 1770 to 1790 (KKKRREPVGEDSVGLKPLKNS). ANK repeat units lie at residues 1867–1910 (DGFT…NLHN), 1915–1944 (TGETALHLAARYARSDAAKRLLESCADANV), 1948–1978 (MGRTPLHAAVAADAQGVFQILIRNRATDLDA), 1982–2011 (DGTTPLILATRLAVEGMVEELINCHADPNA), 2015–2044 (SGKSALHWAAAVNNVDAAVVLLKNGANKDL), and 2048–2077 (KEETPLFLAAREGSYETAKVLLDHLANRDI). Disordered regions lie at residues 2127–2174 (IKPS…GGIM) and 2356–2437 (RMAP…EAFK). Polar residues predominate over residues 2356–2387 (RMAPPISSTQFLTPPSQHSYSNPMDNTPNHQQ). Low complexity predominate over residues 2396–2411 (PSAGSPDQWSSSSPHS). The segment covering 2412–2429 (NLSDWSEGISSPPTSMQM) has biased composition (polar residues).

Belongs to the NOTCH family. In terms of processing, synthesized in the endoplasmic reticulum as an inactive form which is proteolytically cleaved by a furin-like convertase in the trans-Golgi network before it reaches the plasma membrane to yield an active, ligand-accessible form. Cleavage results in a C-terminal fragment N(TM) and a N-terminal fragment N(EC). Following ligand binding, it is cleaved by adam17 to yield a membrane-associated intermediate fragment called notch extracellular truncation (NEXT). Following endocytosis, this fragment is then cleaved by presenilin dependent gamma-secretase to release a Notch-derived peptide containing the intracellular domain (NICD) from the membrane. Post-translationally, O-glycosylated on the EGF-like domains. Contains both O-linked fucose and O-linked glucose. O-linked glycosylation by galnt11 is involved in determination of left/right symmetry: glycosylation promotes activation of notch1, possibly by promoting cleavage by adam17, modulating the balance between motile and immotile (sensory) cilia at the left-right organiser (LRO).

It localises to the cell membrane. It is found in the nucleus. In terms of biological role, functions as a receptor for membrane-bound ligands Jagged-1 (JAG1), Jagged-2 (JAG2) and Delta-1 (DLL1) to regulate cell-fate determination. Upon ligand activation through the released notch intracellular domain (NICD) it forms a transcriptional activator complex with RBPJ/RBPSUH and activates genes of the enhancer of split locus. Affects the implementation of differentiation, proliferation and apoptotic programs. Involved in angiogenesis; negatively regulates endothelial cell proliferation and migration and angiogenic sprouting. Involved in the maturation of both CD4(+) and CD8(+) cells in the thymus. Important for follicular differentiation and possibly cell fate selection within the follicle. During cerebellar development, functions as a receptor for neuronal DNER and is involved in the differentiation of Bergmann glia. Represses neuronal and myogenic differentiation. May play an essential role in postimplantation development, probably in some aspect of cell specification and/or differentiation. May be involved in mesoderm development, somite formation and neurogenesis. Involved in determination of left/right symmetry by modulating the balance between motile and immotile (sensory) cilia at the left-right organiser (LRO). This is Neurogenic locus notch homolog protein 1 (notch1a) from Danio rerio (Zebrafish).